Reading from the N-terminus, the 166-residue chain is Large ribosomal subunit protein uL10 (166 aa).

The protein belongs to the universal ribosomal protein uL10 family. As to quaternary structure, part of the ribosomal stalk of the 50S ribosomal subunit. The N-terminus interacts with L11 and the large rRNA to form the base of the stalk. The C-terminus forms an elongated spine to which L12 dimers bind in a sequential fashion forming a multimeric L10(L12)X complex.

Functionally, forms part of the ribosomal stalk, playing a central role in the interaction of the ribosome with GTP-bound translation factors. This is Large ribosomal subunit protein uL10 from Staphylococcus carnosus (strain TM300).